The following is a 380-amino-acid chain: Cytochrome b (380 aa).

The next 4 membrane-spanning stretches (helical) occupy residues 34 to 54 (FGSL…LLAM), 78 to 99 (WLIR…YLHI), 114 to 134 (WNIG…GYVL), and 179 to 199 (FFAL…VHLT). Heme b is bound by residues H84 and H98. The heme b site is built by H183 and H197. H202 provides a ligand contact to a ubiquinone. The next 4 membrane-spanning stretches (helical) occupy residues 227–247 (IKDM…ALFS), 289–309 (LGGV…PLLH), 321–341 (LLPF…WVGS), and 348–368 (FIII…VLFP).

Belongs to the cytochrome b family. In terms of assembly, the cytochrome bc1 complex contains 11 subunits: 3 respiratory subunits (MT-CYB, CYC1 and UQCRFS1), 2 core proteins (UQCRC1 and UQCRC2) and 6 low-molecular weight proteins (UQCRH/QCR6, UQCRB/QCR7, UQCRQ/QCR8, UQCR10/QCR9, UQCR11/QCR10 and a cleavage product of UQCRFS1). This cytochrome bc1 complex then forms a dimer. Heme b is required as a cofactor.

The protein localises to the mitochondrion inner membrane. Component of the ubiquinol-cytochrome c reductase complex (complex III or cytochrome b-c1 complex) that is part of the mitochondrial respiratory chain. The b-c1 complex mediates electron transfer from ubiquinol to cytochrome c. Contributes to the generation of a proton gradient across the mitochondrial membrane that is then used for ATP synthesis. This Gymnorhina tibicen (Australian magpie) protein is Cytochrome b (MT-CYB).